The following is a 415-amino-acid chain: Actin-like protein 7B (415 aa).

The tract at residues 1–35 is disordered; it reads MATRNSPMALGTAQGDPGEAGTRPGSDAGLRDTGA. Serine 6 carries the post-translational modification Phosphoserine.

The protein belongs to the actin family.

The protein resides in the cytoplasm. It localises to the cytoskeleton. This chain is Actin-like protein 7B (ACTL7B), found in Macaca fascicularis (Crab-eating macaque).